We begin with the raw amino-acid sequence, 92 residues long: Bombyxin A-5 (92 aa).

An N-terminal signal peptide occupies residues 1-19; that stretch reads MKLLLAIALMLTTVMWAST. A Pyrrolidone carboxylic acid modification is found at glutamine 20. Disulfide bonds link cysteine 29–cysteine 79, cysteine 41–cysteine 92, and cysteine 78–cysteine 83. Positions 50–71 are cleaved as a propeptide — c peptide like; that stretch reads SDAQFASYGSAWLMPYSEGRDQ.

It belongs to the insulin family. As to quaternary structure, heterodimer of a B chain and an A chain linked by two disulfide bonds.

The protein resides in the secreted. Functionally, brain peptide responsible for activation of prothoracic glands to produce ecdysone in insects. The protein is Bombyxin A-5 (BBXA5) of Bombyx mori (Silk moth).